The chain runs to 284 residues: 4-hydroxybenzoate octaprenyltransferase (284 aa).

The next 8 membrane-spanning stretches (helical) occupy residues 16–36 (PIGILLLLWPTLWALWLASDG), 40–60 (WTLLAIFTLGTILMRSAGCAI), 91–111 (LLVALALALLSFALIWPLNTL), 132–152 (FFAIPQAYLGIAFGFGIPMGF), 157–177 (NTVPAAAWWLLVANVFWAVAY), 206–226 (VAAVMFCYAVTLGLIFIVGWQ), 231–251 (TWFAAGMLIATGCAIYHYTLI), and 259–279 (CFAAFRHNNWLGAAIFGGVVL).

Belongs to the UbiA prenyltransferase family. The cofactor is Mg(2+).

The protein localises to the cell inner membrane. It catalyses the reaction all-trans-octaprenyl diphosphate + 4-hydroxybenzoate = 4-hydroxy-3-(all-trans-octaprenyl)benzoate + diphosphate. It participates in cofactor biosynthesis; ubiquinone biosynthesis. In terms of biological role, catalyzes the prenylation of para-hydroxybenzoate (PHB) with an all-trans polyprenyl group. Mediates the second step in the final reaction sequence of ubiquinone-8 (UQ-8) biosynthesis, which is the condensation of the polyisoprenoid side chain with PHB, generating the first membrane-bound Q intermediate 3-octaprenyl-4-hydroxybenzoate. This Herminiimonas arsenicoxydans protein is 4-hydroxybenzoate octaprenyltransferase.